We begin with the raw amino-acid sequence, 122 residues long: Dihydroneopterin aldolase (122 aa).

Residues Glu21, Tyr53, and 72–73 (VE) contribute to the substrate site. Lys98 (proton donor/acceptor) is an active-site residue.

Belongs to the DHNA family. As to quaternary structure, homooctamer.

It catalyses the reaction 7,8-dihydroneopterin = 6-hydroxymethyl-7,8-dihydropterin + glycolaldehyde. The catalysed reaction is 7,8-dihydroneopterin = 7,8-dihydromonapterin. It functions in the pathway cofactor biosynthesis; tetrahydrofolate biosynthesis; 2-amino-4-hydroxy-6-hydroxymethyl-7,8-dihydropteridine diphosphate from 7,8-dihydroneopterin triphosphate: step 3/4. Functionally, catalyzes the conversion of 7,8-dihydroneopterin to 6-hydroxymethyl-7,8-dihydropterin. Can use L-threo-dihydroneopterin and D-erythro-dihydroneopterin as substrates for the formation of 6-hydroxymethyldihydropterin, but it can also catalyze the epimerization of carbon 2' of dihydroneopterin to dihydromonapterin at appreciable velocity. This Escherichia coli O6:H1 (strain CFT073 / ATCC 700928 / UPEC) protein is Dihydroneopterin aldolase (folB).